The primary structure comprises 445 residues: Protein PRRC1 (445 aa).

Disordered regions lie at residues 1 to 71 and 105 to 167; these read MMEE…PSAP and PPVS…TGLL. Polar residues predominate over residues 27–49; that stretch reads MSSTPVPLAATSSFSSPNVSSME. Residues 59–71 are compositionally biased toward pro residues; sequence PQPPLPPVRPSAP. Phosphoserine occurs at positions 209 and 408.

Belongs to the PRRC1 family. In terms of assembly, interacts with PRKAR1A; resulting in PKA activation. In terms of tissue distribution, ubiquitously expressed with higher expression in kidney, liver and placenta. Detected in embryonic kidney cells (HEK293 cells) (at protein level). Specifically expressed in liver.

It is found in the golgi apparatus. It localises to the cytoplasm. In terms of biological role, may act as a regulator of the protein kinase A (PKA) activity during embryonic development. The chain is Protein PRRC1 (PRRC1) from Homo sapiens (Human).